The primary structure comprises 158 residues: Protein OPG060 (158 aa).

Belongs to the orthopoxvirus OPG058 family.

The chain is Protein OPG060 (OPG060) from Cynomys gunnisoni (Gunnison's prairie dog).